We begin with the raw amino-acid sequence, 92 residues long: Small ribosomal subunit protein uS19 (92 aa).

It belongs to the universal ribosomal protein uS19 family.

Protein S19 forms a complex with S13 that binds strongly to the 16S ribosomal RNA. The sequence is that of Small ribosomal subunit protein uS19 from Granulibacter bethesdensis (strain ATCC BAA-1260 / CGDNIH1).